The following is a 356-amino-acid chain: Nicotinate-nucleotide--dimethylbenzimidazole phosphoribosyltransferase (356 aa).

The active-site Proton acceptor is the glutamate 317.

It belongs to the CobT family. As to quaternary structure, homodimer.

The enzyme catalyses 5,6-dimethylbenzimidazole + nicotinate beta-D-ribonucleotide = alpha-ribazole 5'-phosphate + nicotinate + H(+). It functions in the pathway nucleoside biosynthesis; alpha-ribazole biosynthesis; alpha-ribazole from 5,6-dimethylbenzimidazole: step 1/2. Catalyzes the synthesis of alpha-ribazole-5'-phosphate from nicotinate mononucleotide (NAMN) and 5,6-dimethylbenzimidazole (DMB). The protein is Nicotinate-nucleotide--dimethylbenzimidazole phosphoribosyltransferase of Salmonella paratyphi A (strain ATCC 9150 / SARB42).